The chain runs to 818 residues: Dapper 1-A (818 aa).

The segment covering 1–10 has biased composition (pro residues); sequence MKPIPSPEPP. Disordered stretches follow at residues 1–30, 60–80, 122–144, 455–486, and 510–530; these read MKPI…WERH, VLSP…PRSD, IDSE…LSDG, NVTP…SALL, and ESSS…SSSQ. Positions 1–337 are interaction with tcf7l1-A; it reads MKPIPSPEPP…PVRTNKPRTS (337 aa). Residues 21–30 are compositionally biased toward basic and acidic residues; it reads DKGEAEWERH. The stretch at 79-130 forms a coiled coil; sequence SDEQKLLEENISLLKKQLNCLRKRDAGLLSQLHELDKQINDLKIDSEKTEET. The span at 122 to 132 shows a compositional bias: basic and acidic residues; the sequence is IDSEKTEETDS. The span at 455-485 shows a compositional bias: polar residues; that stretch reads NVTPNAPANLPNASSSVCNGSPRESTQNSAL. Over residues 512–524 the composition is skewed to basic and acidic residues; it reads SSFEERPPLDFKS. The short motif at 815 to 818 is the PDZ-binding element; the sequence is MTTV.

This sequence belongs to the dapper family. As to quaternary structure, interacts with dbf4 and tcf7l1-A. Interacts with dvl2/dsh via the C-terminus. In terms of tissue distribution, expressed in the animal and dorsal marginal regions at late blastula and early gastrula stages. Expressed predominantly in the anterior neural plate at neurulation. Expressed mainly in the ectodermal placodes, including the eye anlagen and the otic vesicle, at later stages of development.

It is found in the cytoplasm. It localises to the nucleus. In terms of biological role, involved in regulation of intracellular signaling pathways during development. Specifically thought to play a role in canonical and/or non-canonical Wnt signaling pathways through interaction with DSH (Dishevelled) family proteins. Binds to dvl2/dsh and impedes the degradation of beta-catenin (ctnnb1-A and possibly ctnnb1-B), thereby enhancing the transcriptional activation of target genes of the Wnt signaling pathway. Also promotes catenin delta/ctnnd1 stability which in turn promotes zbtb33/kaiso sequestration and thus is involved in the regulation of zbtb33/kaiso-mediated transcriptional repression. May also bind to and directly stimulate the transcriptional activity of tcf7l1-A. Required for eye development and neural patterning. This chain is Dapper 1-A (dact1-a), found in Xenopus laevis (African clawed frog).